The chain runs to 910 residues: E3 ubiquitin-protein ligase MARCHF6 (910 aa).

Position 1 is an N-acetylmethionine (Met1). An RING-CH-type zinc finger spans residues 1 to 62; that stretch reads MDTAEEDICR…ELCKHRFAFT (62 aa). Residues 1–91 lie on the Cytoplasmic side of the membrane; sequence MDTAEEDICR…LVTSIGTAIR (91 aa). Positions 9, 12, 26, 28, 36, 39, 52, and 55 each coordinate Zn(2+). The chain crosses the membrane as a helical span at residues 92–112; sequence YWFHYTLVAFAWLGVVPLTAC. The Extracellular segment spans residues 113–142; it reads RIYKCLFTGSVSSLLTLPLDMLSTENLLAD. Residues 143–163 form a helical membrane-spanning segment; sequence CLQGCFVVTCTLCAFISLVWL. At 164–283 the chain is on the cytoplasmic side; the sequence is REQIVHGGAP…WERMLGLDGS (120 aa). Positions 185–256 are disordered; it reads AAGHHQNEAP…AADANNGAQD (72 aa). Over residues 223–248 the composition is skewed to acidic residues; it reads DAQDDQAEEEEEDNEEEDDAGVEDAA. The helical transmembrane segment at 284–304 threads the bilayer; that stretch reads LVFLEHVFWVVSLNTLFILVF. At 305–336 the chain is on the extracellular side; sequence AFCPYHIGHFSLVGLGFEEHVQASHFEGLITT. Residues 337-357 form a helical membrane-spanning segment; the sequence is IVGYILLAITLIICHGLATLV. Residues 358–376 lie on the Cytoplasmic side of the membrane; that stretch reads KFHRSRRLLGVCYIVVKVS. A helical membrane pass occupies residues 377-397; that stretch reads LLVVVEIGVFPLICGWWLDIC. At 398-421 the chain is on the extracellular side; sequence SLEMFDATLKDRELSFQSAPGTTM. The chain crosses the membrane as a helical span at residues 422–442; the sequence is FLHWLVGMVYVFYFASFILLL. Residues 443 to 480 lie on the Cytoplasmic side of the membrane; it reads REVLRPGVLWFLRNLNDPDFNPVQEMIHLPIYRHLRRF. Residues 481–501 traverse the membrane as a helical segment; it reads ILSVIVFGSIVLLMLWLPIRI. Residues 502-519 are Extracellular-facing; that stretch reads IKSVLPNFLPYNVMLYSD. Residues 520–540 traverse the membrane as a helical segment; the sequence is APVSELSLELLLLQVVLPALL. The Cytoplasmic segment spans residues 541-632; it reads EQGHTRQWLK…YRRPLNFPLR (92 aa). The helical transmembrane segment at 633-653 threads the bilayer; it reads IFLLIVFMCITLLIASLICLT. At 654-678 the chain is on the extracellular side; it reads LPVFAGRWLMSFWTGTAKIHELYTA. Residues 679 to 699 form a helical membrane-spanning segment; sequence ACGLYVCWLTIRAVTVMVAWM. At 700–721 the chain is on the cytoplasmic side; the sequence is PQGRRVIFQKVKEWSLMIMKTL. A helical transmembrane segment spans residues 722–742; the sequence is IVAVLLAGVVPLLLGLLFELV. The Extracellular portion of the chain corresponds to 743–764; the sequence is IVAPLRVPLDQTPLFYPWQDWA. A helical transmembrane segment spans residues 765-785; that stretch reads LGVLHAKIIAAITLMGPQWWL. The Cytoplasmic portion of the chain corresponds to 786-815; the sequence is KTVIEQVYANGIRNIDLHYIVRKLAAPVIS. The helical transmembrane segment at 816–836 threads the bilayer; it reads VLLLSLCVPYVIASGVVPLLG. At 837–848 the chain is on the extracellular side; sequence VTAEMQNLVHRR. A helical transmembrane segment spans residues 849–869; sequence IYPFLLMVVVLMAILSFQVRQ. The Cytoplasmic segment spans residues 870-910; the sequence is FKRLYEHIKNDKYLVGQRLVNYERKSGKQGSSPPPPQSSQE.

Interacts with DIO2. Interacts with SQLE. Post-translationally, auto-ubiquitinated, which results in proteasomal degradation. Deubiquitinated by USP19; protecting MARCHF6 from p97-mediated proteasomal degradation. In terms of tissue distribution, present in brain (at protein level).

The protein resides in the endoplasmic reticulum membrane. The enzyme catalyses S-ubiquitinyl-[E2 ubiquitin-conjugating enzyme]-L-cysteine + [acceptor protein]-L-lysine = [E2 ubiquitin-conjugating enzyme]-L-cysteine + N(6)-ubiquitinyl-[acceptor protein]-L-lysine.. The protein operates within protein modification; protein ubiquitination. Functionally, endoplasmic reticulum membrane-associated E3 ubiquitin ligase that plays a critical role in mitigating endoplasmic reticulum stress, the regulation of cholesterol and lipid homeostasis, and ferroptosis. Acts as a pivotal component of both the Ac/N-degron pathway (targeting the N-terminal acetyl group of substrates) and the ER-associated protein degradation-cytosol (ERAD-C) pathway (targeting misfolded substrates). For instance, mediates the degradation of Ac/N-degron-bearing proteins such as the G-protein regulator RGS2 and the lipid droplet protein PLIN2. Suppresses endoplasmic reticulum stress and ferroptosis through cytosolic POMC degradation. Prevents ferroptosis by acting as a NADPH sensor during lipid peroxidation through its C-terminal regulatory region. Facilitates also the degradation of selected endoplasmic reticulum proteins by associating with signal peptide peptidase for the turnover of endogenous tail-anchored proteins. Promotes ubiquitination of DIO2, leading to its degradation. By ubiquitinating and thereby modulating the stability of many proteins of the cholesterol pathway including SQLE, CYP51A1, CYP11A1 and HMGCR, acts as a crucial post-translational regulator of cholesterol synthesis. The polypeptide is E3 ubiquitin-protein ligase MARCHF6 (Homo sapiens (Human)).